Here is a 303-residue protein sequence, read N- to C-terminus: Quinolinate synthase (303 aa).

Histidine 25 and serine 42 together coordinate iminosuccinate. A [4Fe-4S] cluster-binding site is contributed by cysteine 87. Iminosuccinate is bound by residues 113 to 115 (YVN) and serine 130. Residue cysteine 173 participates in [4Fe-4S] cluster binding. Residues 199–201 (HPE) and threonine 216 contribute to the iminosuccinate site. Cysteine 261 serves as a coordination point for [4Fe-4S] cluster.

Belongs to the quinolinate synthase family. Type 2 subfamily. It depends on [4Fe-4S] cluster as a cofactor.

The protein localises to the cytoplasm. The catalysed reaction is iminosuccinate + dihydroxyacetone phosphate = quinolinate + phosphate + 2 H2O + H(+). It participates in cofactor biosynthesis; NAD(+) biosynthesis; quinolinate from iminoaspartate: step 1/1. Catalyzes the condensation of iminoaspartate with dihydroxyacetone phosphate to form quinolinate. The sequence is that of Quinolinate synthase from Desulforudis audaxviator (strain MP104C).